A 344-amino-acid polypeptide reads, in one-letter code: Heat-inducible transcription repressor HrcA (344 aa).

This sequence belongs to the HrcA family.

In terms of biological role, negative regulator of class I heat shock genes (grpE-dnaK-dnaJ and groELS operons). Prevents heat-shock induction of these operons. The sequence is that of Heat-inducible transcription repressor HrcA from Streptococcus pyogenes serotype M6 (strain ATCC BAA-946 / MGAS10394).